The chain runs to 45 residues: Large ribosomal subunit protein bL34 (45 aa).

The protein belongs to the bacterial ribosomal protein bL34 family.

In Salinispora arenicola (strain CNS-205), this protein is Large ribosomal subunit protein bL34.